Here is a 179-residue protein sequence, read N- to C-terminus: Large ribosomal subunit protein uL5 (179 aa).

Belongs to the universal ribosomal protein uL5 family. As to quaternary structure, part of the 50S ribosomal subunit; part of the 5S rRNA/L5/L18/L25 subcomplex. Contacts the 5S rRNA and the P site tRNA. Forms a bridge to the 30S subunit in the 70S ribosome.

This is one of the proteins that bind and probably mediate the attachment of the 5S RNA into the large ribosomal subunit, where it forms part of the central protuberance. In the 70S ribosome it contacts protein S13 of the 30S subunit (bridge B1b), connecting the 2 subunits; this bridge is implicated in subunit movement. Contacts the P site tRNA; the 5S rRNA and some of its associated proteins might help stabilize positioning of ribosome-bound tRNAs. The sequence is that of Large ribosomal subunit protein uL5 from Solidesulfovibrio magneticus (strain ATCC 700980 / DSM 13731 / RS-1) (Desulfovibrio magneticus).